The following is a 218-amino-acid chain: Protein GrpE (218 aa).

The span at 1-10 (MSGEASTPAQ) shows a compositional bias: polar residues. Disordered stretches follow at residues 1-44 (MSGE…DPAE) and 198-218 (SMGP…AEDS). Positions 200–218 (GPGPSADAEGAASAEAEDS) are enriched in low complexity.

This sequence belongs to the GrpE family. As to quaternary structure, homodimer.

The protein localises to the cytoplasm. Its function is as follows. Participates actively in the response to hyperosmotic and heat shock by preventing the aggregation of stress-denatured proteins, in association with DnaK and GrpE. It is the nucleotide exchange factor for DnaK and may function as a thermosensor. Unfolded proteins bind initially to DnaJ; upon interaction with the DnaJ-bound protein, DnaK hydrolyzes its bound ATP, resulting in the formation of a stable complex. GrpE releases ADP from DnaK; ATP binding to DnaK triggers the release of the substrate protein, thus completing the reaction cycle. Several rounds of ATP-dependent interactions between DnaJ, DnaK and GrpE are required for fully efficient folding. This is Protein GrpE from Parasynechococcus marenigrum (strain WH8102).